The following is a 185-amino-acid chain: ATP-dependent protease subunit HslV (185 aa).

Residue T12 is part of the active site. 3 residues coordinate Na(+): S168, C171, and T174.

It belongs to the peptidase T1B family. HslV subfamily. As to quaternary structure, a double ring-shaped homohexamer of HslV is capped on each side by a ring-shaped HslU homohexamer. The assembly of the HslU/HslV complex is dependent on binding of ATP.

The protein resides in the cytoplasm. The enzyme catalyses ATP-dependent cleavage of peptide bonds with broad specificity.. Its activity is regulated as follows. Allosterically activated by HslU binding. Functionally, protease subunit of a proteasome-like degradation complex believed to be a general protein degrading machinery. This is ATP-dependent protease subunit HslV from Jannaschia sp. (strain CCS1).